The primary structure comprises 83 residues: Small ribosomal subunit protein bS18A (83 aa).

This sequence belongs to the bacterial ribosomal protein bS18 family. Part of the 30S ribosomal subunit. Forms a tight heterodimer with protein bS6.

Its function is as follows. Binds as a heterodimer with protein bS6 to the central domain of the 16S rRNA, where it helps stabilize the platform of the 30S subunit. In Mycolicibacterium vanbaalenii (strain DSM 7251 / JCM 13017 / BCRC 16820 / KCTC 9966 / NRRL B-24157 / PYR-1) (Mycobacterium vanbaalenii), this protein is Small ribosomal subunit protein bS18A.